The primary structure comprises 438 residues: Histidinol dehydrogenase (438 aa).

NAD(+) is bound by residues tyrosine 129, glutamine 193, and asparagine 216. 3 residues coordinate substrate: threonine 239, glutamine 261, and histidine 264. 2 residues coordinate Zn(2+): glutamine 261 and histidine 264. Active-site proton acceptor residues include glutamate 330 and histidine 331. Histidine 331, aspartate 364, glutamate 418, and histidine 423 together coordinate substrate. Residue aspartate 364 participates in Zn(2+) binding. A Zn(2+)-binding site is contributed by histidine 423.

The protein belongs to the histidinol dehydrogenase family. Requires Zn(2+) as cofactor.

The catalysed reaction is L-histidinol + 2 NAD(+) + H2O = L-histidine + 2 NADH + 3 H(+). Its pathway is amino-acid biosynthesis; L-histidine biosynthesis; L-histidine from 5-phospho-alpha-D-ribose 1-diphosphate: step 9/9. In terms of biological role, catalyzes the sequential NAD-dependent oxidations of L-histidinol to L-histidinaldehyde and then to L-histidine. The protein is Histidinol dehydrogenase of Thermobifida fusca (strain YX).